Consider the following 657-residue polypeptide: Pyoverdine export ATP-binding/permease protein PvdT (657 aa).

The ABC transporter domain occupies 6-245 (IDLQDIRKSY…ASTNPGALQA (240 aa)). 43–50 (GASGSGKS) provides a ligand contact to ATP. 4 helical membrane passes run 285–305 (ALTL…LAVG), 539–559 (IAAI…LMTV), 590–610 (LSVV…GVLI), and 620–640 (LVAI…FGFM).

Belongs to the ABC transporter superfamily. Macrolide exporter (TC 3.A.1.122) family. Part of the tripartite efflux system PvdRT-OpmQ, which is composed of an inner membrane component with both ATPase and permease domains, PvdT, a periplasmic membrane fusion protein, PvdR, and an outer membrane component, OpmQ.

The protein resides in the cell inner membrane. Its function is as follows. Part of the tripartite efflux system PvdRT-OpmQ required for the secretion into the extracellular milieu of the siderophore pyoverdine (PVD), which is involved in iron acquisition. This subunit binds PVD and drives its secretion by hydrolyzing ATP. The system is responsible for export of newly synthesized PVD after the final steps of biosynthesis have taken place in the periplasm. It is also responsible for recycling of PVD after internalization of ferri-PVD into the periplasm by the outer-membrane receptor FpvA and release of iron from PVD, thus making PVD available for new cycles of iron uptake. The chain is Pyoverdine export ATP-binding/permease protein PvdT from Pseudomonas fluorescens (strain Pf0-1).